Consider the following 134-residue polypeptide: Arsenate reductase (134 aa).

Catalysis depends on nucleophile residues cysteine 11, cysteine 83, and cysteine 90. Cystine bridges form between cysteine 11–cysteine 83 and cysteine 83–cysteine 90.

Belongs to the low molecular weight phosphotyrosine protein phosphatase family. Thioredoxin-coupled ArsC subfamily.

It localises to the cytoplasm. It carries out the reaction arsenate + [thioredoxin]-dithiol + H(+) = arsenite + [thioredoxin]-disulfide + H2O. Functionally, catalyzes the reduction of arsenate [As(V)] to arsenite [As(III)]. In Bacillus cereus (strain ZK / E33L), this protein is Arsenate reductase.